We begin with the raw amino-acid sequence, 40 residues long: Competence and sporulation stimulating factor (40 aa).

Positions 1–35 are excised as a propeptide; the sequence is MKLKSKLFVICLAAAAIFTAAGVSANAEALDFHVT.

Belongs to the Phr family. As to quaternary structure, interacts with RapC and inhibits its interaction with ComA. Post-translationally, secreted with a propeptide domain, which is cleaved in the cell wall by the secreted serine proteases subtilisin, Epr and Vpr to produce a mature signaling peptide. Contains a predicted signal peptide cleavage site in the N-terminal region, however the propeptide is probably subject to only one processing event, at the N-terminal end of the mature peptide.

Its subcellular location is the secreted. The protein localises to the cytoplasm. It localises to the host cell. Its function is as follows. Signaling molecule that serves as a cell density signal for both genetic competence development and sporulation. Secreted during production, but the mature peptide acts intracellularly, indicating that it needs to be imported into the cell to function. At low concentrations, CSF stimulates expression of the genes controlled by ComA, a transcriptional factor that regulates the development of genetic competence. It includes the srfA operon, which encodes a small protein, ComS, required for competence development, and the surfactin biosynthetic enzymes. Acts by inhibiting RapC, which regulates the activity of ComA. At high concentrations, it inhibits expression of those same ComA-controlled genes, maybe by inhibiting activity of the kinase ComP. In addition, high concentrations of CSF can stimulate sporulation under some conditions. Also inhibits RapB activity, with lower efficiency, but does not act on RapA. Is probably involved in the quorum sensing control of sporulation. CSF is a species-specific signaling molecule that partially compensates for the lack of ComX-mediated communication between different strains of B.subtilis. B.subtilis is a well-characterized soil and water saprophyte, but it is also found in enteric flora of many species, including humans. In this environment, CSF can be transported into human intestinal epithelia via OCTN2, a host cell membrane transporter, and can induce cytoprotective heat shock proteins contributing to intestinal homeostasis. In terms of biological role, in addition, in non-domesticated swarming strains of B.subtilis, the residual propeptide exposed on the exterior of the cytoplasmic membrane may have an extracellular role in swarming. This function is probably not dependent on CSF. This Bacillus subtilis (strain 168) protein is Competence and sporulation stimulating factor.